A 737-amino-acid chain; its full sequence is MALVKYSTVFFPLRSLRLFVSIKKAYYHSEPHSIDLFHDKDWIVKRPKFLNLPKNEHSKLDIFQFNFNKSESNNVYLQDSSFKDNLDKAMQFIYNDKLSSLDAKQVPIKNLAWLKLRDYIYQQLKDPKLQAKTYVPSVSEIIHPSSPGNLISLLINCNKISNLVWKSVLKYSLSNNITTLDKFIHVLQQTFDHVYEQEILPMMTNTDDTDGAHNVDITNPAEWFPEARKIRRHIIMHIGPTNSGKTYRALQKLKSVDRGYYAGPLRLLAREVYDRFHAEKIRCNLLTGEEVIRDLDDRGNSAGLTSGTVEMVPINQKFDVVVLDEIQMMSDGDRGWAWTNALLGVVSKEVHLCGEKSVLPLVKSIVKMTGDKLTINEYERLGKLSVEEKPIKDGIKGLRKGDCVVAFSKKKILDLKLKIEKDTNLKVAVIYGSLPPETRVQQAALFNNGEYDIMVASDAIGMGLNLSIDRVVFTTNMKYNGEELMEMTSSQIKQIGGRAGRFKSRSASGGVPQGFITSFESKVLKSVRKAIEAPVEYLKTAVTWPTDEICAQLMTQFPPGTPTSVLLQTISDELEKSSDNLFTLSDLKSKLKVIGLFEHMEDIPFFDKLKLSNAPVKDMPMVTKAFTKFCETIAKRHTRGLLSYRLPFNLLDYNCIPNESYSLEVYESLYNIITLYFWLSNRYPNYFIDMESAKDLKYFCEMIIFEKLDRLKKNPYAHKPFGSTRGHLSSSRRRLRT.

A mitochondrion-targeting transit peptide spans 1–25 (MALVKYSTVFFPLRSLRLFVSIKKA). A Helicase ATP-binding domain is found at 226–365 (EARKIRRHII…KSVLPLVKSI (140 aa)). Position 239–246 (239–246 (GPTNSGKT)) interacts with ATP. Residues 390-546 (PIKDGIKGLR…YLKTAVTWPT (157 aa)) form the Helicase C-terminal domain.

This sequence belongs to the helicase family. MSU1 and SUV3 are the two components of the mitochondrial degradosome (mtEXO).

It localises to the mitochondrion matrix. It catalyses the reaction ATP + H2O = ADP + phosphate + H(+). Functionally, required for intron-independent turnover and processing of mitochondrial RNA. It is a key control element in nuclear-mitochondrial interactions. This chain is ATP-dependent RNA helicase SUV3, mitochondrial (SUV3), found in Saccharomyces cerevisiae (strain ATCC 204508 / S288c) (Baker's yeast).